Reading from the N-terminus, the 283-residue chain is Phosphate import ATP-binding protein PstB (283 aa).

Positions 1 to 20 (MAQTLAQTKQISQSHTFDVS) are enriched in polar residues. The segment at 1–32 (MAQTLAQTKQISQSHTFDVSQSHHKTPDDTNS) is disordered. Residues 37–278 (YSTQNLDLWY…PSNKKTEDYI (242 aa)) enclose the ABC transporter domain. 69 to 76 (GPSGCGKS) contacts ATP.

It belongs to the ABC transporter superfamily. Phosphate importer (TC 3.A.1.7) family. In terms of assembly, the complex is composed of two ATP-binding proteins (PstB), two transmembrane proteins (PstC and PstA) and a solute-binding protein (PstS).

It is found in the cell membrane. The enzyme catalyses phosphate(out) + ATP + H2O = ADP + 2 phosphate(in) + H(+). Functionally, part of the ABC transporter complex PstSACB involved in phosphate import. Responsible for energy coupling to the transport system. This Staphylococcus aureus (strain MRSA252) protein is Phosphate import ATP-binding protein PstB.